We begin with the raw amino-acid sequence, 413 residues long: Divalent metal cation transporter MntH (413 aa).

Over 1–19 (MTDNRVENSSGRAARKLRL) the chain is Cytoplasmic. Residues 20-39 (ALMGPAFIAAIGYIDPGNFA) form a helical membrane-spanning segment. The Periplasmic segment spans residues 40–51 (TNIQAGASFGYQ). A helical transmembrane segment spans residues 52 to 71 (LLWVVVWANLMAMLIQILSA). Topologically, residues 72-95 (KLGIATGKNLAEQIRDHYPRPVVW) are cytoplasmic. Residues 96-118 (FYWVQAEIIAMATDLAEFIGAAI) traverse the membrane as a helical segment. Over 119–125 (GFKLILG) the chain is Periplasmic. The chain crosses the membrane as a helical span at residues 126 to 145 (VSLLQGAVLTGIATFLILML). Topologically, residues 146-155 (QRRGQKPLEK) are cytoplasmic. The chain crosses the membrane as a helical span at residues 156-175 (VIGGLLLFVAAAYIVELFFS). Residues 176-196 (QPDMAQLGKGMVIPALPNPEA) are Periplasmic-facing. A helical membrane pass occupies residues 197 to 220 (VFLAAGVLGATIMPHVIYLHSSLT). At 221–238 (QHLHGGTRQQRYSATKWD) the chain is on the cytoplasmic side. Residues 239–258 (VAIAMTIAGFVNLAMMATAA) form a helical membrane-spanning segment. The Periplasmic segment spans residues 259-276 (AAFHFSGHTGIADLDQAY). Residues 277–297 (LTLEPLLSHAAATVFGLSLVA) form a helical membrane-spanning segment. The Cytoplasmic segment spans residues 298-327 (AGLSSTVVGTLAGQVVMQGFVRFHIPLWVR). The helical transmembrane segment at 328–344 (RTITMLPSFIVILMGLD) threads the bilayer. Topologically, residues 345-350 (PTRILV) are periplasmic. A helical membrane pass occupies residues 351–370 (MSQVLLSFGIALALVPLLIF). The Cytoplasmic portion of the chain corresponds to 371 to 387 (TSNATLMGELVNTRRVK). Residues 388-406 (QIGWIIVVLVVALNIWLLV) form a helical membrane-spanning segment. At 407–413 (GTVMGLS) the chain is on the periplasmic side.

It belongs to the NRAMP family.

It is found in the cell inner membrane. Its function is as follows. H(+)-stimulated, divalent metal cation uptake system. The polypeptide is Divalent metal cation transporter MntH (Salmonella schwarzengrund (strain CVM19633)).